The primary structure comprises 920 residues: Urea transporter 2 (920 aa).

The tract at residues 25–57 (FTSPSWPSTSPDTHPALPLLEMPEEKDLRSSNE) is disordered. Positions 26 to 39 (TSPSWPSTSPDTHP) are enriched in low complexity. Over residues 47–57 (PEEKDLRSSNE) the composition is skewed to basic and acidic residues. Transmembrane regions (helical) follow at residues 151-170 (WWTI…ALAL), 176-196 (AIAS…MAVF), 204-224 (WWLL…SSAL), 233-253 (LPVF…ATGH), 272-291 (ITWT…VGVG), 302-322 (GGVF…HAAI), 346-366 (WSYN…ALTW), 370-390 (LLAL…SNIM), and 392-412 (VVGV…FLLL). The segment at 446–467 (EKAPSGGGGEHPPTAGPKVEEG) is disordered. A Phosphoserine modification is found at S477. Transmembrane regions (helical) follow at residues 600 to 620 (GILI…SGCL), 638 to 658 (AIAA…MAVF), 666 to 686 (WWLL…SSAL), and 695 to 715 (LPVF…ATGH). An N-linked (GlcNAc...) asparagine glycan is attached at N733. A run of 4 helical transmembrane segments spans residues 764-784 (GGIF…HAAI), 803-823 (IYFG…GGMF), 832-852 (LLAI…ANML), and 854-874 (VFGL…FLLL).

The protein belongs to the urea transporter family. As to quaternary structure, interacts with SNAPIN which enhances its urea transport activity. Epressed in the inner medulla of the kidney (at protein level). As to expression, expressed in the kidney.

It is found in the apical cell membrane. It localises to the cell membrane. It carries out the reaction urea(in) = urea(out). With respect to regulation, inhibited by phloretin. Functionally, mediates the transport of urea driven by a concentration gradient across the cell membrane of the renal inner medullary collecting duct which is critical to the urinary concentrating mechanism. Its function is as follows. Mediates the transport of urea driven by a concentration gradient across the cell membrane of the kidney inner medullary collecting duct which is critical to the urinary concentrating mechanism. The chain is Urea transporter 2 (SLC14A2) from Homo sapiens (Human).